Here is a 370-residue protein sequence, read N- to C-terminus: Lipoyl synthase 1, chloroplastic (370 aa).

Disordered stretches follow at residues 1 to 25 and 39 to 67; these read MMQS…PVCR and EAAP…KKPA. The transit peptide at 1–37 directs the protein to the chloroplast; the sequence is MMQSSLARPLPRPPIRPACGNPVCRSRPGSVSVARCR. 7 residues coordinate [4Fe-4S] cluster: C95, C100, C106, C132, C136, C139, and S347. The Radical SAM core domain occupies 115–336; it reads GEGDGIATAT…KEYGESVGFR (222 aa).

This sequence belongs to the radical SAM superfamily. Lipoyl synthase family. It depends on [4Fe-4S] cluster as a cofactor.

Its subcellular location is the plastid. The protein localises to the chloroplast. The catalysed reaction is [[Fe-S] cluster scaffold protein carrying a second [4Fe-4S](2+) cluster] + N(6)-octanoyl-L-lysyl-[protein] + 2 oxidized [2Fe-2S]-[ferredoxin] + 2 S-adenosyl-L-methionine + 4 H(+) = [[Fe-S] cluster scaffold protein] + N(6)-[(R)-dihydrolipoyl]-L-lysyl-[protein] + 4 Fe(3+) + 2 hydrogen sulfide + 2 5'-deoxyadenosine + 2 L-methionine + 2 reduced [2Fe-2S]-[ferredoxin]. It functions in the pathway protein modification; protein lipoylation via endogenous pathway; protein N(6)-(lipoyl)lysine from octanoyl-[acyl-carrier-protein]: step 2/2. Its function is as follows. Catalyzes the radical-mediated insertion of two sulfur atoms into the C-6 and C-8 positions of the octanoyl moiety bound to the lipoyl domains of lipoate-dependent enzymes, thereby converting the octanoylated domains into lipoylated derivatives. This chain is Lipoyl synthase 1, chloroplastic, found in Oryza sativa subsp. indica (Rice).